The following is a 37-amino-acid chain: Large ribosomal subunit protein bL36 (37 aa).

The protein belongs to the bacterial ribosomal protein bL36 family.

The protein is Large ribosomal subunit protein bL36 of Francisella tularensis subsp. mediasiatica (strain FSC147).